The primary structure comprises 474 residues: Glutamate--tRNA ligase (474 aa).

The 'HIGH' region signature appears at 11–21 (PSPTGFLHIGG). The short motif at 240 to 244 (KLSKR) is the 'KMSKS' region element. An ATP-binding site is contributed by K243.

Belongs to the class-I aminoacyl-tRNA synthetase family. Glutamate--tRNA ligase type 1 subfamily. In terms of assembly, monomer.

Its subcellular location is the cytoplasm. It carries out the reaction tRNA(Glu) + L-glutamate + ATP = L-glutamyl-tRNA(Glu) + AMP + diphosphate. Its function is as follows. Catalyzes the attachment of glutamate to tRNA(Glu) in a two-step reaction: glutamate is first activated by ATP to form Glu-AMP and then transferred to the acceptor end of tRNA(Glu). The protein is Glutamate--tRNA ligase of Bradyrhizobium sp. (strain BTAi1 / ATCC BAA-1182).